The sequence spans 540 residues: Phosphoenolpyruvate carboxykinase (ATP) (540 aa).

Residue Arg65 participates in substrate binding. Lys87 carries the N6-acetyllysine modification. Substrate contacts are provided by Tyr207 and Lys213. Residues Lys213, His232, and 248-256 (GLSGTGKTT) each bind ATP. Mn(2+) contacts are provided by Lys213 and His232. Residue Asp269 coordinates Mn(2+). ATP contacts are provided by residues Glu297, Arg333, 449–450 (RI), and Thr455. Arg333 contacts substrate. Lys523 bears the N6-acetyllysine mark.

This sequence belongs to the phosphoenolpyruvate carboxykinase (ATP) family. Monomer. It depends on Mn(2+) as a cofactor.

It localises to the cytoplasm. It carries out the reaction oxaloacetate + ATP = phosphoenolpyruvate + ADP + CO2. It participates in carbohydrate biosynthesis; gluconeogenesis. Involved in the gluconeogenesis. Catalyzes the conversion of oxaloacetate (OAA) to phosphoenolpyruvate (PEP) through direct phosphoryl transfer between the nucleoside triphosphate and OAA. The protein is Phosphoenolpyruvate carboxykinase (ATP) of Escherichia coli O127:H6 (strain E2348/69 / EPEC).